Consider the following 267-residue polypeptide: MTNNTDKQTLKKLERQILRKTTQVINQYNMIEDGDKIMVCLSGGKDSYCLLEMLLLLQKKAPISFEIIAVNLDQKQPGFPEEVLPNYLKNKGVEFHIIERDTYSIVKRVIPEGKTTCGLCSRMRRGILYDFAEENNVTKVALGHHRDDIIETFFLNLFYNGSIKAMPTKLLSDDKRNIVIRPLAFVSEKETLEYSQLKEFPIIPCNLCGSQDNLQRVFIKDMLNRWEQNNPERKNVIFKALSNISPSQMLDKELFDFINISKDDIQR.

Positions 42–47 (SGGKDS) match the PP-loop motif motif. The [4Fe-4S] cluster site is built by Cys117, Cys120, and Cys208.

This sequence belongs to the TtcA family. As to quaternary structure, homodimer. Mg(2+) serves as cofactor. [4Fe-4S] cluster is required as a cofactor.

It localises to the cytoplasm. The enzyme catalyses cytidine(32) in tRNA + S-sulfanyl-L-cysteinyl-[cysteine desulfurase] + AH2 + ATP = 2-thiocytidine(32) in tRNA + L-cysteinyl-[cysteine desulfurase] + A + AMP + diphosphate + H(+). The protein operates within tRNA modification. Functionally, catalyzes the ATP-dependent 2-thiolation of cytidine in position 32 of tRNA, to form 2-thiocytidine (s(2)C32). The sulfur atoms are provided by the cysteine/cysteine desulfurase (IscS) system. In Francisella tularensis subsp. holarctica (strain FTNF002-00 / FTA), this protein is tRNA-cytidine(32) 2-sulfurtransferase 2.